A 627-amino-acid polypeptide reads, in one-letter code: Sphingomyelin phosphodiesterase (627 aa).

The first 44 residues, 1 to 44 (MPHHRASSGQDHLRAGWEQRLERSLPAPRVGLLWMGLGLALVLA), serve as a signal peptide directing secretion. One can recognise a Saposin B-type domain in the interval 83–167 (QNLTCPACKV…LLGSSCGHWD (85 aa)). The N-linked (GlcNAc...) asparagine glycan is linked to N84. Cystine bridges form between C87–C163, C90–C155, and C118–C129. N-linked (GlcNAc...) asparagine glycosylation is present at N173. Zn(2+) is bound by residues D204 and H206. Disulfide bonds link C219–C224 and C225–C248. Positions 276 and 316 each coordinate Zn(2+). N333 and N393 each carry an N-linked (GlcNAc...) asparagine glycan. Residues C383 and C429 are joined by a disulfide bond. Residues H423, H455, and H457 each coordinate Zn(2+). At S506 the chain carries Phosphoserine. A glycan (N-linked (GlcNAc...) asparagine) is linked at N518. Disulfide bonds link C582/C586 and C592/C605. Residue N611 is glycosylated (N-linked (GlcNAc...) asparagine).

Belongs to the acid sphingomyelinase family. In terms of assembly, monomer. Interacts with SORT1; the interaction is required for SMPD1 targeting to lysosomes. The cofactor is Zn(2+). In terms of processing, proteolytically processed. Mature lysosomal form arises from C-terminal proteolytic processing of pro-sphingomyelin phosphodiesterase. Both lysosomal and secreted forms are glycosylated but they show a differential pattern of glycosylation. Post-translationally, phosphorylated at Ser-506 by PRKCD upon stress stimuli. Phosphorylation is required for secretion. In terms of processing, this form is generated following cleavage by CASP7 in the extracellular milieu. It shows increased activity.

It is found in the lysosome. It localises to the lipid droplet. The protein localises to the secreted. Its subcellular location is the extracellular space. It carries out the reaction a sphingomyelin + H2O = phosphocholine + an N-acylsphing-4-enine + H(+). The catalysed reaction is N-(octadecanoyl)-sphing-4-enine-1-phosphocholine + H2O = N-octadecanoylsphing-4-enine + phosphocholine + H(+). The enzyme catalyses a 1,2-diacyl-sn-glycero-3-phosphocholine + H2O = phosphocholine + a 1,2-diacyl-sn-glycerol + H(+). It catalyses the reaction 1,2-dihexadecanoyl-sn-glycero-3-phosphocholine + H2O = 1,2-dihexadecanoyl-sn-glycerol + phosphocholine + H(+). Its activity is regulated as follows. Hydrolysis of liposomal sphingomyelin is stimulated by incorporation of diacylglycerol (DAG), ceramide and free fatty acids into the liposomal membranes. Phosphatidylcholine hydrolysis is inhibited by incorporation of cholesterol, ceramide, DAG, monoacylglycerol and fatty acids. In terms of biological role, converts sphingomyelin to ceramide. Exists as two enzymatic forms that arise from alternative trafficking of a single protein precursor, one that is targeted to the endolysosomal compartment, whereas the other is released extracellularly. However, in response to various forms of stress, lysosomal exocytosis may represent a major source of the secretory form. In the lysosomes, converts sphingomyelin to ceramide. Plays an important role in the export of cholesterol from the intraendolysosomal membranes. Also has phospholipase C activities toward 1,2-diacylglycerolphosphocholine and 1,2-diacylglycerolphosphoglycerol. Modulates stress-induced apoptosis through the production of ceramide. Its function is as follows. When secreted, modulates cell signaling with its ability to reorganize the plasma membrane by converting sphingomyelin to ceramide. Secreted form is increased in response to stress and inflammatory mediators such as IL1B, IFNG or TNF as well as upon infection with bacteria and viruses. Produces the release of ceramide in the outer leaflet of the plasma membrane playing a central role in host defense. Ceramide reorganizes these rafts into larger signaling platforms that are required to internalize P.aeruginosa, induce apoptosis and regulate the cytokine response in infected cells. In wounded cells, the lysosomal form is released extracellularly in the presence of Ca(2+) and promotes endocytosis and plasma membrane repair. Functionally, this form is generated following cleavage by CASP7 in the extracellular milieu in response to bacterial infection. It shows increased ability to convert sphingomyelin to ceramide and promotes plasma membrane repair. Plasma membrane repair by ceramide counteracts the action of gasdermin-D (GSDMD) perforin (PRF1) pores that are formed in response to bacterial infection. In terms of biological role, (Microbial infection) Secretion is activated by bacteria such as P.aeruginosa, this activation results in the release of ceramide in the outer leaflet of the plasma membrane which facilitates the infection. The sequence is that of Sphingomyelin phosphodiesterase from Mus musculus (Mouse).